Consider the following 134-residue polypeptide: Small ribosomal subunit protein uS12 (134 aa).

The tract at residues 1–27 (MPTIQQLVRKGRESFADKSKSPALNSC) is disordered. Positions 10 to 20 (KGRESFADKSK) are enriched in basic and acidic residues. Aspartate 89 carries the 3-methylthioaspartic acid modification. Residues 103 to 134 (DTAGVNGRTQRRSKYGAKRPKPGQAPAAKGKK) form a disordered region. A compositionally biased stretch (basic residues) spans 111–123 (TQRRSKYGAKRPK). Residues 124 to 134 (PGQAPAAKGKK) show a composition bias toward low complexity.

Belongs to the universal ribosomal protein uS12 family. In terms of assembly, part of the 30S ribosomal subunit. Contacts proteins S8 and S17. May interact with IF1 in the 30S initiation complex.

In terms of biological role, with S4 and S5 plays an important role in translational accuracy. Functionally, interacts with and stabilizes bases of the 16S rRNA that are involved in tRNA selection in the A site and with the mRNA backbone. Located at the interface of the 30S and 50S subunits, it traverses the body of the 30S subunit contacting proteins on the other side and probably holding the rRNA structure together. The combined cluster of proteins S8, S12 and S17 appears to hold together the shoulder and platform of the 30S subunit. The chain is Small ribosomal subunit protein uS12 from Porphyromonas gingivalis (strain ATCC 33277 / DSM 20709 / CIP 103683 / JCM 12257 / NCTC 11834 / 2561).